A 302-amino-acid polypeptide reads, in one-letter code: MKTHQFSTALFSDYKQGDSFNFPCPAKLNLFLYINGRRTDGYHELQTLFQFLDYGDWLSIKVRNDGKIRLTPEIPDLKTEDNLIYRAAKLLQQKTACRLGADLHLDKVLPMGGGVGGGSSNAATALVALNYLWKTGLSVNELAELGLKLGADVPIFVHGKAAFAEGVGEKITYCEPPEKWYAVIKPNVSISTAKVFSEPDLTRDTKKKPLEQLLQQEYTNDCEKVVRKLYPEVEELLRWLVKYAPSRLTGSGACVFAEFADEQSAQTVFNLKSKQFSGFVAQGLNVSPLHKMLEQLNRQNHG.

Lys-27 is an active-site residue. 110-120 (PMGGGVGGGSS) provides a ligand contact to ATP. Residue Asp-152 is part of the active site.

It belongs to the GHMP kinase family. IspE subfamily.

It carries out the reaction 4-CDP-2-C-methyl-D-erythritol + ATP = 4-CDP-2-C-methyl-D-erythritol 2-phosphate + ADP + H(+). It participates in isoprenoid biosynthesis; isopentenyl diphosphate biosynthesis via DXP pathway; isopentenyl diphosphate from 1-deoxy-D-xylulose 5-phosphate: step 3/6. Functionally, catalyzes the phosphorylation of the position 2 hydroxy group of 4-diphosphocytidyl-2C-methyl-D-erythritol. The protein is 4-diphosphocytidyl-2-C-methyl-D-erythritol kinase of Mannheimia succiniciproducens (strain KCTC 0769BP / MBEL55E).